The sequence spans 52 residues: ATP synthase protein 8 (52 aa).

The chain crosses the membrane as a helical span at residues 6–26 (PLLWLNLFLMFSATFVMFIVL).

It belongs to the ATPase protein 8 family. F-type ATPases have 2 components, CF(1) - the catalytic core - and CF(0) - the membrane proton channel.

Its subcellular location is the mitochondrion membrane. Functionally, mitochondrial membrane ATP synthase (F(1)F(0) ATP synthase or Complex V) produces ATP from ADP in the presence of a proton gradient across the membrane which is generated by electron transport complexes of the respiratory chain. F-type ATPases consist of two structural domains, F(1) - containing the extramembraneous catalytic core and F(0) - containing the membrane proton channel, linked together by a central stalk and a peripheral stalk. During catalysis, ATP synthesis in the catalytic domain of F(1) is coupled via a rotary mechanism of the central stalk subunits to proton translocation. Part of the complex F(0) domain. Minor subunit located with subunit a in the membrane. The protein is ATP synthase protein 8 (MT-ATP8) of Penaeus monodon (Giant tiger prawn).